A 512-amino-acid chain; its full sequence is ATP synthase subunit alpha (512 aa).

Residue Gly169–Thr176 participates in ATP binding.

It belongs to the ATPase alpha/beta chains family. F-type ATPases have 2 components, CF(1) - the catalytic core - and CF(0) - the membrane proton channel. CF(1) has five subunits: alpha(3), beta(3), gamma(1), delta(1), epsilon(1). CF(0) has three main subunits: a(1), b(2) and c(9-12). The alpha and beta chains form an alternating ring which encloses part of the gamma chain. CF(1) is attached to CF(0) by a central stalk formed by the gamma and epsilon chains, while a peripheral stalk is formed by the delta and b chains.

Its subcellular location is the cell inner membrane. It catalyses the reaction ATP + H2O + 4 H(+)(in) = ADP + phosphate + 5 H(+)(out). Produces ATP from ADP in the presence of a proton gradient across the membrane. The alpha chain is a regulatory subunit. This chain is ATP synthase subunit alpha, found in Orientia tsutsugamushi (strain Ikeda) (Rickettsia tsutsugamushi).